Consider the following 652-residue polypeptide: RNA-binding KH domain-containing protein RCF3 (652 aa).

Positions 1-14 are enriched in basic and acidic residues; sequence MERSRSKRNYHYDQ. Residues 1–63 are disordered; the sequence is MERSRSKRNY…NGRPSKSHPE (63 aa). A compositionally biased stretch (gly residues) spans 34–55; that stretch reads FGGGGGGNNRYRGGGGGGGGNG. 2 consecutive KH domains span residues 67-139 and 175-245; these read TTTY…QEAL and RVVT…LAIV. Positions 253-307 are disordered; it reads QHRDRSNFQGRSHSPERSFAAAGDDYMPQLRRQSSDRFPRGNFRNNNFSSRQSNY. Positions 292–306 are enriched in low complexity; the sequence is RGNFRNNNFSSRQSN. KH domains lie at 324–391, 408–476, and 576–640; these read ELVF…QEAL, LITT…LVEL, and RSTL…QSLL.

Homodimer. Interacts with CPL1. Interacts with RS40 and RS41. Interacts with DRB1/HYL1 and SE. Interacts with CPL2. As to expression, expressed in roots, cotyledons, leaves, flowers and siliques.

The protein localises to the nucleus. Its subcellular location is the nucleus speckle. In terms of biological role, acts as a negative regulator of osmotic stress-induced gene expression. Involved in the regulation of thermotolerance responses under heat stress. Functions as an upstream regulator of heat stress transcription factor (HSF) genes. Negatively regulates HSFA1A, HSFA1B and HSFA1D, but positively controls the expression of HSFA1E, HSFA3, HSFA9, HSFB3, and DREB2C. Forms a complex with CPL1 that modulates co-transcriptional processes such as mRNA capping and polyadenylation, and functions to repress stress-inducible gene expression. Regulates pre-mRNA processing under salt stress. Involved in primary miRNA processing and pri-miRNA biogenesis. Binds both intronless and intron-containing pri-miRNAs. Acts as a regulator of biotic stress response gene expression and basal JA-mediated responses involved in defense. Acts as a negative regulator of resistance to the fungal pathogen Fusarium oxysporum. The polypeptide is RNA-binding KH domain-containing protein RCF3 (Arabidopsis thaliana (Mouse-ear cress)).